We begin with the raw amino-acid sequence, 217 residues long: Chorionic somatomammotropin hormone 1 (217 aa).

A signal peptide spans M1–A26. A Zn(2+)-binding site is contributed by H44. C79 and C191 are oxidised to a cystine. E200 is a binding site for Zn(2+). A disulfide bridge connects residues C208 and C215.

This sequence belongs to the somatotropin/prolactin family. In terms of assembly, can be found in a monomeric as well as dimeric form.

It is found in the secreted. In terms of biological role, produced only during pregnancy and is involved in stimulating lactation, fetal growth and metabolism. Does not interact with GHR but only activates PRLR through zinc-induced dimerization. In Homo sapiens (Human), this protein is Chorionic somatomammotropin hormone 1 (CSH1).